The chain runs to 161 residues: MSSFVTNGYLPVTLEPHELTLDIKTNIRNAVYKAYLHREISGKMAKKIEIREDVELPLGEIVNNSVVINVPCVITYAYYHVGDIVRGTLNIEDESNVTIQCGDLICKLSRDSGTVSFSDSKYCFFRNGNAYDNGIEVSAVLMEAQQGTESSFVFLANIVDS.

It belongs to the poxviridae DNA-directed RNA polymerase 18 kDa subunit family. As to quaternary structure, the DNA-dependent RNA polymerase used for intermediate and late genes expression consists of eight subunits Rpo30/OPG66, Rpo7/OPG90, Rpo22/OPG103, Rpo147/OPG105, Rpo18/OPG119, Rpo19/OPG131, Rpo132/OPG151 and Rpo35/OPG156. The same holoenzyme, with the addition of the transcription-specificity factor OPG109, is used for early gene expression. Post-translationally, apparently non-glycosylated.

It localises to the virion. The enzyme catalyses RNA(n) + a ribonucleoside 5'-triphosphate = RNA(n+1) + diphosphate. Part of the DNA-dependent RNA polymerase which catalyzes the transcription of viral DNA into RNA using the four ribonucleoside triphosphates as substrates. Responsible for the transcription of early, intermediate and late genes. DNA-dependent RNA polymerase associates with the early transcription factor (ETF), itself composed of OPG118 and OPG133, thereby allowing the early genes transcription. Late transcription, and probably also intermediate transcription, require newly synthesized RNA polymerase. The chain is DNA-directed RNA polymerase 18 kDa subunit (OPG119) from Cynomys gunnisoni (Gunnison's prairie dog).